Here is a 1170-residue protein sequence, read N- to C-terminus: Glucose transport transcription regulator RGT1 (1170 aa).

The segment covering 1-22 (MNELNTVSTNSSDSTKNGGTSN) has biased composition (polar residues). Positions 1–46 (MNELNTVSTNSSDSTKNGGTSNSPDDMDSAAAASHAIKKRTKASRA) are disordered. Positions 47 to 76 (CDQCRKKKIKCDYKDEKGVCSNCQRNGDRC) form a DNA-binding region, zn(2)-C6 fungal-type. The tract at residues 77-149 (SFDRVPLKRG…PSTPSRSNSV (73 aa)) is disordered. Residues 99–108 (RTNEIQDHNN) show a composition bias toward basic and acidic residues. Residues 113–138 (NTFDNSNNTLNNNTGNSGDNGINSNT) show a composition bias toward low complexity. Polar residues predominate over residues 139 to 149 (VPSTPSRSNSV). Ser-202, Ser-205, Ser-208, and Ser-229 each carry phosphoserine. Disordered regions lie at residues 226–254 (VQQS…SASG), 269–288 (APTD…IPSL), 293–323 (SNSL…LQQG), 384–506 (AQQT…HPMT), and 944–977 (NYRP…SAAP). Residues 239–250 (SGNANGSVTGSG) show a composition bias toward low complexity. Residues 271–280 (TDDHNGEQTR) are compositionally biased toward basic and acidic residues. Phosphoserine is present on residues Ser-283 and Ser-284. Composition is skewed to low complexity over residues 293 to 302 (SNSLLLGGQP), 309 to 323 (QQSQ…LQQG), and 385 to 397 (QQTQ…QVPQ). A phosphoserine mark is found at Ser-410 and Ser-414. Residues 411 to 422 (APVSVTLSTDRL) are compositionally biased toward polar residues. Positions 424–444 (GNENNNGEINNNNGSNNSGSS) are enriched in low complexity. The span at 445–457 (KDTSQHSQESVTT) shows a compositional bias: polar residues. Basic residues predominate over residues 473 to 488 (STKKRRKSYVSKKTKP). Polar residues predominate over residues 493–506 (SISITSKDSAHPMT). A Phosphoserine modification is found at Ser-1130.

The protein belongs to the EDS1/RGT1 family. In terms of processing, glucose-induced phosphorylation regulates the DNA-binding activity. Hyperphosphorylation in cells growing on high levels of glucose does prevents DNA-binding and dephosphorylation restores DNA-binding ability.

Its subcellular location is the nucleus. It localises to the cytoplasm. Glucose-responsive transcription factor that regulates expression of several glucose transporter (HXT) genes in response to glucose. In the absence of glucose, it functions as a transcriptional repressor, whereas high concentrations of glucose cause it to function as a transcriptional activator. In cells growing on low levels of glucose, has a neutral role, neither repressing nor activating transcription. Binds the consensus binding site sequence 5'-CGGANNA-3', of which multiple copies are present in all HXT promoters regulated by RGT1. The protein is Glucose transport transcription regulator RGT1 (RGT1) of Saccharomyces cerevisiae (strain RM11-1a) (Baker's yeast).